A 334-amino-acid polypeptide reads, in one-letter code: Holliday junction branch migration complex subunit RuvB (334 aa).

The tract at residues 4 to 184 is large ATPase domain (RuvB-L); it reads ADRIISPNAT…FGIVQRLEFY (181 aa). ATP is bound by residues isoleucine 23, arginine 24, glycine 65, lysine 68, threonine 69, threonine 70, 131–133, arginine 174, tyrosine 184, and arginine 221; that span reads EDY. Mg(2+) is bound at residue threonine 69. The small ATPAse domain (RuvB-S) stretch occupies residues 185-255; sequence SVEDLRHIVA…VADKALNMLN (71 aa). The segment at 258–334 is head domain (RuvB-H); sequence LHGFDHMDRR…YNHFGLTMPE (77 aa). DNA is bound by residues arginine 313 and arginine 318.

It belongs to the RuvB family. In terms of assembly, homohexamer. Forms an RuvA(8)-RuvB(12)-Holliday junction (HJ) complex. HJ DNA is sandwiched between 2 RuvA tetramers; dsDNA enters through RuvA and exits via RuvB. An RuvB hexamer assembles on each DNA strand where it exits the tetramer. Each RuvB hexamer is contacted by two RuvA subunits (via domain III) on 2 adjacent RuvB subunits; this complex drives branch migration. In the full resolvosome a probable DNA-RuvA(4)-RuvB(12)-RuvC(2) complex forms which resolves the HJ.

The protein localises to the cytoplasm. The enzyme catalyses ATP + H2O = ADP + phosphate + H(+). In terms of biological role, the RuvA-RuvB-RuvC complex processes Holliday junction (HJ) DNA during genetic recombination and DNA repair, while the RuvA-RuvB complex plays an important role in the rescue of blocked DNA replication forks via replication fork reversal (RFR). RuvA specifically binds to HJ cruciform DNA, conferring on it an open structure. The RuvB hexamer acts as an ATP-dependent pump, pulling dsDNA into and through the RuvAB complex. RuvB forms 2 homohexamers on either side of HJ DNA bound by 1 or 2 RuvA tetramers; 4 subunits per hexamer contact DNA at a time. Coordinated motions by a converter formed by DNA-disengaged RuvB subunits stimulates ATP hydrolysis and nucleotide exchange. Immobilization of the converter enables RuvB to convert the ATP-contained energy into a lever motion, pulling 2 nucleotides of DNA out of the RuvA tetramer per ATP hydrolyzed, thus driving DNA branch migration. The RuvB motors rotate together with the DNA substrate, which together with the progressing nucleotide cycle form the mechanistic basis for DNA recombination by continuous HJ branch migration. Branch migration allows RuvC to scan DNA until it finds its consensus sequence, where it cleaves and resolves cruciform DNA. This Hahella chejuensis (strain KCTC 2396) protein is Holliday junction branch migration complex subunit RuvB.